The primary structure comprises 574 residues: Proline--tRNA ligase (574 aa).

Belongs to the class-II aminoacyl-tRNA synthetase family. ProS type 1 subfamily. Homodimer.

Its subcellular location is the cytoplasm. It catalyses the reaction tRNA(Pro) + L-proline + ATP = L-prolyl-tRNA(Pro) + AMP + diphosphate. Its function is as follows. Catalyzes the attachment of proline to tRNA(Pro) in a two-step reaction: proline is first activated by ATP to form Pro-AMP and then transferred to the acceptor end of tRNA(Pro). As ProRS can inadvertently accommodate and process non-cognate amino acids such as alanine and cysteine, to avoid such errors it has two additional distinct editing activities against alanine. One activity is designated as 'pretransfer' editing and involves the tRNA(Pro)-independent hydrolysis of activated Ala-AMP. The other activity is designated 'posttransfer' editing and involves deacylation of mischarged Ala-tRNA(Pro). The misacylated Cys-tRNA(Pro) is not edited by ProRS. This is Proline--tRNA ligase from Buchnera aphidicola subsp. Baizongia pistaciae (strain Bp).